Reading from the N-terminus, the 130-residue chain is Small ribosomal subunit protein bS6 (130 aa).

The disordered stretch occupies residues 100-130 (SPMVKAKDERRERREDFAEAGDDVEAGDSEE). Residues 104 to 116 (KAKDERRERREDF) are compositionally biased toward basic and acidic residues. Acidic residues predominate over residues 117-130 (AEAGDDVEAGDSEE).

This sequence belongs to the bacterial ribosomal protein bS6 family.

Binds together with bS18 to 16S ribosomal RNA. This Pectobacterium atrosepticum (strain SCRI 1043 / ATCC BAA-672) (Erwinia carotovora subsp. atroseptica) protein is Small ribosomal subunit protein bS6.